Here is a 1037-residue protein sequence, read N- to C-terminus: Multidrug resistance protein MdtF (1037 aa).

The Cytoplasmic segment spans residues 1-9 (MANYFIDRP). The chain crosses the membrane as a helical span at residues 10–30 (VFAWVLAIIMMLAGGLAIMNL). The Periplasmic segment spans residues 31–338 (PVAQYPQIAP…TTPFIKISIQ (308 aa)). Residues 339 to 359 (EVFKTLVEAIILVFLVMYLFL) form a helical membrane-spanning segment. The Cytoplasmic segment spans residues 360–369 (QNFRATIIPT). The helical transmembrane segment at 370-390 (IAVPVVILGTFAILSAVGFTI) threads the bilayer. Topologically, residues 391–392 (NT) are periplasmic. A helical membrane pass occupies residues 393–413 (LTMFGMVLAIGLLVDDAIVVV). Residues 414–440 (ENVERVIAEDKLPPKEATHKSMGQIQR) lie on the Cytoplasmic side of the membrane. Residues 441–461 (ALVGIAVVLSAVFMPMAFMSG) form a helical membrane-spanning segment. Over 462–471 (ATGEIYRQFS) the chain is Periplasmic. A helical membrane pass occupies residues 472-492 (ITLISSMLLSVFVAMSLTPAL). Residues 493–534 (CATILKAAPEGGHKPNALFARFNTLFEKSTQHYTDSTRSLLR) lie on the Cytoplasmic side of the membrane. Residues 535-555 (CTGRYMVVYLLICAGMAVLFL) traverse the membrane as a helical segment. The Periplasmic portion of the chain corresponds to 556 to 870 (RTPTSFLPEE…SYQEALSSNQ (315 aa)). A helical transmembrane segment spans residues 871–891 (APALYAISLVVVFLALAALYE). Ser892 is a topological domain (cytoplasmic). A helical transmembrane segment spans residues 893-913 (WSIPFSVMLVVPLGVVGALLA). Topologically, residues 914–927 (TDLRGLSNDVYFQV) are periplasmic. A helical transmembrane segment spans residues 928–948 (GLLTTIGLSAKNAILIVEFAV). At 949-972 (EMMQKEGKTPVEAIIEAARMRLRP) the chain is on the cytoplasmic side. Residues 973–993 (ILMTSLAFILGVLPLVISHGA) form a helical membrane-spanning segment. The Periplasmic segment spans residues 994–1006 (GSGAQNAVGTGVM). Residues 1007 to 1027 (GGMFAATVLAIYFVPVFFVVV) form a helical membrane-spanning segment. Residues 1028 to 1037 (EHLFARFKKA) lie on the Cytoplasmic side of the membrane.

This sequence belongs to the resistance-nodulation-cell division (RND) (TC 2.A.6) family. Homotrimer. Part of the tripartite efflux system MdtEF-TolC, which is composed of an inner membrane transporter, MdtF, a membrane fusion protein, MdtE, and an outer membrane component, TolC. The complex forms a large protein conduit and can translocate molecules across both the inner and outer membranes.

Its subcellular location is the cell inner membrane. Part of the tripartite efflux system MdtEF-TolC, which confers resistance to various compounds. This Escherichia coli O6:H1 (strain CFT073 / ATCC 700928 / UPEC) protein is Multidrug resistance protein MdtF (mdtF).